Consider the following 348-residue polypeptide: Anthranilate phosphoribosyltransferase (348 aa).

5-phospho-alpha-D-ribose 1-diphosphate is bound by residues Gly-81, 84 to 85 (GD), 91 to 94 (NVST), 109 to 117 (KHGNRAVSG), and Ser-121. An anthranilate-binding site is contributed by Gly-81. Position 93 (Ser-93) interacts with Mg(2+). Position 112 (Asn-112) interacts with anthranilate. Arg-167 contributes to the anthranilate binding site. Mg(2+)-binding residues include Asp-226 and Glu-227.

It belongs to the anthranilate phosphoribosyltransferase family. As to quaternary structure, homodimer. The cofactor is Mg(2+).

The enzyme catalyses N-(5-phospho-beta-D-ribosyl)anthranilate + diphosphate = 5-phospho-alpha-D-ribose 1-diphosphate + anthranilate. It participates in amino-acid biosynthesis; L-tryptophan biosynthesis; L-tryptophan from chorismate: step 2/5. Functionally, catalyzes the transfer of the phosphoribosyl group of 5-phosphorylribose-1-pyrophosphate (PRPP) to anthranilate to yield N-(5'-phosphoribosyl)-anthranilate (PRA). The protein is Anthranilate phosphoribosyltransferase of Azotobacter vinelandii (strain DJ / ATCC BAA-1303).